Reading from the N-terminus, the 349-residue chain is ATP synthase subunit a-2 (349 aa).

The propeptide occupies 1–97 (MERLTRLNHF…SNYMKLMEIP (97 aa)). Transmembrane regions (helical) follow at residues 118–138 (FSFTNSSLFMLLTLSFFLLLI), 184–204 (FFPCILVTFLFLLFCNLQGMI), 213–233 (HFLITLALSFSIFIGITIVGF), 240–260 (FFSFLLPAGVPLPLAPFLVLL), 280–300 (MMAGHSLVKILSGFAWTMLCM), 303–323 (IFYFIGALGPLFIVLALTGLE), and 326–346 (VAILQAYVFTILICIYLNDAI).

The protein belongs to the ATPase A chain family. F-type ATPases have 2 components, CF(1) - the catalytic core - and CF(0) - the membrane proton channel. CF(1) has five subunits: alpha(3), beta(3), gamma(1), delta(1), epsilon(1). CF(0) has three main subunits: a, b and c.

It is found in the mitochondrion inner membrane. Mitochondrial membrane ATP synthase (F(1)F(0) ATP synthase or Complex V) produces ATP from ADP in the presence of a proton gradient across the membrane which is generated by electron transport complexes of the respiratory chain. F-type ATPases consist of two structural domains, F(1) - containing the extramembraneous catalytic core and F(0) - containing the membrane proton channel, linked together by a central stalk and a peripheral stalk. During catalysis, ATP synthesis in the catalytic domain of F(1) is coupled via a rotary mechanism of the central stalk subunits to proton translocation. Key component of the proton channel; it may play a direct role in the translocation of protons across the membrane. The chain is ATP synthase subunit a-2 (ATP6-2) from Arabidopsis thaliana (Mouse-ear cress).